The sequence spans 302 residues: Oxygen-dependent coproporphyrinogen-III oxidase (302 aa).

Substrate is bound at residue Ser94. His98 and His108 together coordinate a divalent metal cation. The active-site Proton donor is His108. 110-112 (NVR) lines the substrate pocket. Positions 147 and 177 each coordinate a divalent metal cation. Residues 242–277 (YVEFNLVYDRGTLFGLQTGGRTESILMSMPPLVRWQ) are important for dimerization. A substrate-binding site is contributed by 260–262 (GGR).

Belongs to the aerobic coproporphyrinogen-III oxidase family. In terms of assembly, homodimer. A divalent metal cation is required as a cofactor.

The protein resides in the cytoplasm. The catalysed reaction is coproporphyrinogen III + O2 + 2 H(+) = protoporphyrinogen IX + 2 CO2 + 2 H2O. The protein operates within porphyrin-containing compound metabolism; protoporphyrin-IX biosynthesis; protoporphyrinogen-IX from coproporphyrinogen-III (O2 route): step 1/1. Involved in the heme biosynthesis. Catalyzes the aerobic oxidative decarboxylation of propionate groups of rings A and B of coproporphyrinogen-III to yield the vinyl groups in protoporphyrinogen-IX. This is Oxygen-dependent coproporphyrinogen-III oxidase from Shewanella oneidensis (strain ATCC 700550 / JCM 31522 / CIP 106686 / LMG 19005 / NCIMB 14063 / MR-1).